A 426-amino-acid polypeptide reads, in one-letter code: Serine hydroxymethyltransferase (426 aa).

(6S)-5,6,7,8-tetrahydrofolate contacts are provided by residues leucine 118 and 122-124 (GHL). Lysine 227 is modified (N6-(pyridoxal phosphate)lysine).

The protein belongs to the SHMT family. In terms of assembly, homodimer. The cofactor is pyridoxal 5'-phosphate.

The protein resides in the cytoplasm. It carries out the reaction (6R)-5,10-methylene-5,6,7,8-tetrahydrofolate + glycine + H2O = (6S)-5,6,7,8-tetrahydrofolate + L-serine. Its pathway is one-carbon metabolism; tetrahydrofolate interconversion. It participates in amino-acid biosynthesis; glycine biosynthesis; glycine from L-serine: step 1/1. Catalyzes the reversible interconversion of serine and glycine with tetrahydrofolate (THF) serving as the one-carbon carrier. This reaction serves as the major source of one-carbon groups required for the biosynthesis of purines, thymidylate, methionine, and other important biomolecules. Also exhibits THF-independent aldolase activity toward beta-hydroxyamino acids, producing glycine and aldehydes, via a retro-aldol mechanism. This is Serine hydroxymethyltransferase from Mycobacterium leprae (strain Br4923).